The primary structure comprises 596 residues: DNA mismatch repair protein MutL (596 aa).

The protein belongs to the DNA mismatch repair MutL/HexB family.

This protein is involved in the repair of mismatches in DNA. It is required for dam-dependent methyl-directed DNA mismatch repair. May act as a 'molecular matchmaker', a protein that promotes the formation of a stable complex between two or more DNA-binding proteins in an ATP-dependent manner without itself being part of a final effector complex. This Leptospira borgpetersenii serovar Hardjo-bovis (strain L550) protein is DNA mismatch repair protein MutL.